The sequence spans 392 residues: NDP-glycosyltransferase YjiC (392 aa).

UDP-binding positions include N18, T229, S255, V278, H293, and 297–301 (NSTME).

The protein belongs to the UDP-glycosyltransferase family. In terms of assembly, monomer.

The enzyme catalyses an NDP-glycose + an acceptor = a glycosylated acceptor + NDP.. Activity is improved in the presence of Mn(2+), Mg(2+) and Ca(2+), and inhibited by Ni(2+), Zn(2+) and Cu(2+). Glycosyltransferase that can glycosylate a wide range of substrates, including various flavonoids, phenyl ketones, curcuminoid, lignins, zingerone, triterpenes, stilbene and anthraquinone, using UDP-glucose or ADP-glucose as sugar donor. It also exhibits O-, N- and S-glycosylation activities towards simple aromatics. In vivo, the broad acceptor tolerance of YjiC might function as a detoxification agent against exogenous xenobiotics to make the strain adaptable to the changeable environment. This chain is NDP-glycosyltransferase YjiC (yjiC), found in Bacillus subtilis (strain 168).